The chain runs to 685 residues: Eukaryotic peptide chain release factor GTP-binding subunit (685 aa).

Disordered regions lie at residues 1-34 (MSDS…GYQA), 63-99 (YNPD…GGRG), and 112-234 (GYQA…NVTS). Serine 2 is subject to N-acetylserine. The tract at residues 2 to 239 (SDSNQGNNQQ…ANVTSADALI (238 aa)) is interaction with PAB1. Residues 5-135 (NQGNNQQNYQ…LNDFQKQQKQ (131 aa)) form a prion domain (PrD) region. A compositionally biased stretch (polar residues) spans 117–129 (FQPQSQGMSLNDF). Positions 139-249 (KPKKTLKLVS…KEQEEEVDDE (111 aa)) are charged. Positions 166–222 (AESDKKEEEKSAETKEPTKEPTKVEEPVKKEEKPVQTEEKTEEKSELPKVEDLKISE) are enriched in basic and acidic residues. Polar residues predominate over residues 223 to 234 (STHNTNNANVTS). The tr-type G domain occupies 258 to 484 (KDHVSLIFMG…YLDTMNHVDR (227 aa)). A G1 region spans residues 267 to 274 (GHVDAGKS). GTP is bound at residue 267 to 274 (GHVDAGKS). A G2 region spans residues 323-327 (GKTIE). The tract at residues 344–347 (DAPG) is G3. GTP contacts are provided by residues 406-409 (NKMD) and 449-450 (GY). The interval 406–409 (NKMD) is G4. The interval 448–450 (SGY) is G5. A Phosphoserine modification is found at serine 571.

Belongs to the TRAFAC class translation factor GTPase superfamily. Classic translation factor GTPase family. ERF3 subfamily. As to quaternary structure, heterodimer of two subunits, one of which binds GTP. Interacts with polyadenylate-binding protein PAB1, and TPA1.

Its subcellular location is the cytoplasm. The catalysed reaction is GTP + H2O = GDP + phosphate + H(+). Its function is as follows. GTPase component of the eRF1-eRF3-GTP ternary complex, a ternary complex that mediates translation termination in response to the termination codons UAA, UAG and UGA. SUP35/eRF3 mediates SUP45/eRF1 delivery to stop codons: The eRF1-eRF3-GTP complex binds to a stop codon in the ribosomal A-site. GTP hydrolysis by SUP35/eRF3 induces a conformational change that leads to its dissociation, permitting SUP45/eRF1 to accommodate fully in the A-site. Recruited by polyadenylate-binding protein PAB1 to poly(A)-tails of mRNAs. Interaction with PAB1 is also required for regulation of normal mRNA decay through translation termination-coupled poly(A) shortening. This chain is Eukaryotic peptide chain release factor GTP-binding subunit (SUP35), found in Saccharomyces cerevisiae (strain ATCC 204508 / S288c) (Baker's yeast).